Here is a 329-residue protein sequence, read N- to C-terminus: Methionyl-tRNA formyltransferase (329 aa).

112–115 contributes to the (6S)-5,6,7,8-tetrahydrofolate binding site; it reads SILP.

Belongs to the Fmt family.

The catalysed reaction is L-methionyl-tRNA(fMet) + (6R)-10-formyltetrahydrofolate = N-formyl-L-methionyl-tRNA(fMet) + (6S)-5,6,7,8-tetrahydrofolate + H(+). Its function is as follows. Attaches a formyl group to the free amino group of methionyl-tRNA(fMet). The formyl group appears to play a dual role in the initiator identity of N-formylmethionyl-tRNA by promoting its recognition by IF2 and preventing the misappropriation of this tRNA by the elongation apparatus. This chain is Methionyl-tRNA formyltransferase, found in Shewanella sediminis (strain HAW-EB3).